The primary structure comprises 508 residues: Photosystem II CP47 reaction center protein (508 aa).

6 helical membrane passes run 21-36 (AVHL…WAGS), 101-115 (IVLS…IWHW), 140-156 (GIHL…FGAF), 203-218 (IAAG…FHLC), 237-252 (VLSS…AFVV), and 457-472 (CFAL…HGAR).

The protein belongs to the PsbB/PsbC family. PsbB subfamily. PSII is composed of 1 copy each of membrane proteins PsbA, PsbB, PsbC, PsbD, PsbE, PsbF, PsbH, PsbI, PsbJ, PsbK, PsbL, PsbM, PsbT, PsbX, PsbY, PsbZ, Psb30/Ycf12, at least 3 peripheral proteins of the oxygen-evolving complex and a large number of cofactors. It forms dimeric complexes. Binds multiple chlorophylls. PSII binds additional chlorophylls, carotenoids and specific lipids. serves as cofactor.

It is found in the plastid. Its subcellular location is the chloroplast thylakoid membrane. Functionally, one of the components of the core complex of photosystem II (PSII). It binds chlorophyll and helps catalyze the primary light-induced photochemical processes of PSII. PSII is a light-driven water:plastoquinone oxidoreductase, using light energy to abstract electrons from H(2)O, generating O(2) and a proton gradient subsequently used for ATP formation. This Chlorella vulgaris (Green alga) protein is Photosystem II CP47 reaction center protein.